A 297-amino-acid polypeptide reads, in one-letter code: Acetaldehyde dehydrogenase (297 aa).

15-18 (SGSI) is a binding site for NAD(+). C130 acts as the Acyl-thioester intermediate in catalysis. Residues 162–170 (SAGIATREN) and N272 each bind NAD(+).

This sequence belongs to the acetaldehyde dehydrogenase family.

It carries out the reaction acetaldehyde + NAD(+) + CoA = acetyl-CoA + NADH + H(+). This Burkholderia pseudomallei (strain K96243) protein is Acetaldehyde dehydrogenase (mhpF).